A 1182-amino-acid chain; its full sequence is Retrotransposable element SLACS 132 kDa protein (1182 aa).

Disordered stretches follow at residues 77 to 97, 163 to 220, 317 to 339, and 418 to 478; these read GERS…PRER, DVLD…STDQ, RRKR…ALRL, and RTAR…STAP. Over residues 163-174 the composition is skewed to acidic residues; that stretch reads DVLDEEEQDDDL. Basic and acidic residues predominate over residues 420-446; sequence ARREQQQQRGKDNQEEEDRQKKEEKSL. Over residues 456-475 the composition is skewed to polar residues; that stretch reads SVRQGGQPSSSQPKRLNRWS. A Reverse transcriptase domain is found at 560–790; the sequence is NADVSMEVGR…TGDTGFGTAV (231 aa).

The catalysed reaction is DNA(n) + a 2'-deoxyribonucleoside 5'-triphosphate = DNA(n+1) + diphosphate. In Trypanosoma brucei gambiense, this protein is Retrotransposable element SLACS 132 kDa protein.